Here is a 334-residue protein sequence, read N- to C-terminus: Glyceraldehyde-3-phosphate dehydrogenase (334 aa).

NAD(+)-binding positions include 12-13 (RI), aspartate 37, arginine 81, and serine 123. Residues 153–155 (SCT) and threonine 184 each bind D-glyceraldehyde 3-phosphate. Cysteine 154 acts as the Nucleophile in catalysis. Residue asparagine 185 coordinates NAD(+). Residues arginine 199, 212-213 (TG), and arginine 235 contribute to the D-glyceraldehyde 3-phosphate site. An NAD(+)-binding site is contributed by asparagine 314.

Belongs to the glyceraldehyde-3-phosphate dehydrogenase family. As to quaternary structure, homotetramer.

It is found in the cytoplasm. The enzyme catalyses D-glyceraldehyde 3-phosphate + phosphate + NAD(+) = (2R)-3-phospho-glyceroyl phosphate + NADH + H(+). It participates in carbohydrate degradation; glycolysis; pyruvate from D-glyceraldehyde 3-phosphate: step 1/5. Its function is as follows. Catalyzes the oxidative phosphorylation of glyceraldehyde 3-phosphate (G3P) to 1,3-bisphosphoglycerate (BPG) using the cofactor NAD. The first reaction step involves the formation of a hemiacetal intermediate between G3P and a cysteine residue, and this hemiacetal intermediate is then oxidized to a thioester, with concomitant reduction of NAD to NADH. The reduced NADH is then exchanged with the second NAD, and the thioester is attacked by a nucleophilic inorganic phosphate to produce BPG. This chain is Glyceraldehyde-3-phosphate dehydrogenase (gap), found in Pseudomonas aeruginosa (strain ATCC 15692 / DSM 22644 / CIP 104116 / JCM 14847 / LMG 12228 / 1C / PRS 101 / PAO1).